Consider the following 424-residue polypeptide: MKKLLFAIPLVVPFYSHSAETVESCLAKPHTENSFTNVWKDDKTLDRYANYEGCLWNATGVVVCTGDETQCYGTWVPIGLAIPENEGGGSEGGGSEGGGSEGGGTKPPEYGDTPIPGYTYINPLDGTYPPGTEQNPANPNPSLEESQPLNTFMFQNNRFRNRQGALTVYTGTVTQGTDPVKTYYQYTPVSSKAMYDAYWNGKFRDCAFHSGFNEDPFVCEYQGQSSDLPQPPVNAGGGSGGGSGGGSEGGGSEGGGSEGGGSEGGGSGGGSGSGDFDYEKMANANKGAMTENADENALQSDAKGKLDSVATDYGAAIDGFIGDVSGLANGNGATGDFAGSNSQMAQVGDGDNSPLMNNFRQYLPSLPQSVECRPFVFSAGKPYEFSIDCDKINLFRGVFAFLLYVATFMYVFSTFANILRNKES.

The signal sequence occupies residues 1–18 (MKKLLFAIPLVVPFYSHS). Residues 19–85 (AETVESCLAK…VPIGLAIPEN (67 aa)) form an N1 region. 2 disulfide bridges follow: cysteine 25–cysteine 54 and cysteine 64–cysteine 71. The segment at 83–147 (PENEGGGSEG…NPNPSLEESQ (65 aa)) is disordered. Positions 86–104 (EGGGSEGGGSEGGGSEGGG) are G1 (Gly-rich linker). Residues 86 to 105 (EGGGSEGGGSEGGGSEGGGT) show a composition bias toward gly residues. A hinge region spans residues 105-141 (TKPPEYGDTPIPGYTYINPLDGTYPPGTEQNPANPNP). Residues 132 to 147 (TEQNPANPNPSLEESQ) are compositionally biased toward polar residues. Residues 142 to 228 (SLEESQPLNT…CEYQGQSSDL (87 aa)) form an N2 region. Residues cysteine 206 and cysteine 219 are joined by a disulfide bond. Residues 222–279 (QGQSSDLPQPPVNAGGGSGGGSGGGSEGGGSEGGGSEGGGSEGGGSGGGSGSGDFDYE) form a disordered region. Over residues 235-273 (AGGGSGGGSGGGSEGGGSEGGGSEGGGSEGGGSGGGSGS) the composition is skewed to gly residues. Positions 236–274 (GGGSGGGSGGGSEGGGSEGGGSEGGGSEGGGSGGGSGSG) are G2 (Gly-rich linker). The not essential for gene 3 function stretch occupies residues 253 to 262 (EGGGSEGGGS). A CT region spans residues 275–424 (DFDYEKMANA…FANILRNKES (150 aa)). The helical transmembrane segment at 398–418 (VFAFLLYVATFMYVFSTFANI) threads the bilayer.

Belongs to the inovirus G3P protein family. As to quaternary structure, interacts with G6P; this interaction is required for proper integration of G3P and G6P into the virion. Interacts with G8P. Interacts with the tip of the host pilus. Interacts (via N-terminus) with host TolA. Interacts (via transmembrane domain) with host TolQ (via 2nd and 3rd transmembrane domains); this interaction allows the phage translocation across the host inner membrane. Interacts (via transmembrane domain) with host TolR (via transmembrane domain); this interaction allows the phage translocation across the host inner membrane. In terms of processing, in one of the crystallographic structures Trp-39 is oxidized to 1',2'-dihydro-2'-oxotryptophan.

It localises to the virion. The protein localises to the host membrane. Plays essential roles both in the penetration of the viral genome into the bacterial host via pilus retraction and in the extrusion process. During the initial step of infection, G3P mediates adsorption of the phage to its primary receptor, the tip of host F-pilus. Attachment of the phage causes pilus retraction bringing the viral particle into close proximity of the host cell inner membrane. Binding to the host pilus initiates a change in the G3P conformation, allowing subsequent interaction with the host entry receptors TolA, TolQ and TolR and penetration of the viral DNA into the host cytoplasm. In the extrusion process, G3P mediates the release of the membrane-anchored virion from the cell via its C-terminal domain. This is Attachment protein G3P (III) from Enterobacteria phage M13 (Bacteriophage M13).